Consider the following 338-residue polypeptide: Formamidase (338 aa).

The region spanning 14–260 (LLIAAIQYPV…WEIVTAELFP (247 aa)) is the CN hydrolase domain. Catalysis depends on E60, which acts as the Proton acceptor. The Proton donor role is filled by K133. Catalysis depends on C166, which acts as the Nucleophile.

This sequence belongs to the carbon-nitrogen hydrolase superfamily. Aliphatic amidase family.

It catalyses the reaction formamide + H2O = formate + NH4(+). Functionally, is an aliphatic amidase with a restricted substrate specificity, as it only hydrolyzes formamide. The polypeptide is Formamidase (Photorhabdus laumondii subsp. laumondii (strain DSM 15139 / CIP 105565 / TT01) (Photorhabdus luminescens subsp. laumondii)).